The chain runs to 267 residues: DCN1-like protein 2 (267 aa).

Residues 1–48 (MTRKYTKKSSGSTASTTNSTAEIVDLTTSTSSVGKKRKSPDEKAQPIT) form a disordered region. The span at 8 to 21 (KSSGSTASTTNSTA) shows a compositional bias: low complexity. The DCUN1 domain occupies 75-262 (HYTYLYTYIF…LLDQFSEWVQ (188 aa)).

This chain is DCN1-like protein 2, found in Dictyostelium discoideum (Social amoeba).